A 381-amino-acid polypeptide reads, in one-letter code: Alkanesulfonate monooxygenase (381 aa).

It belongs to the SsuD family. Homotetramer.

The catalysed reaction is an alkanesulfonate + FMNH2 + O2 = an aldehyde + FMN + sulfite + H2O + 2 H(+). In terms of biological role, catalyzes the desulfonation of aliphatic sulfonates. This is Alkanesulfonate monooxygenase from Shigella flexneri.